The sequence spans 187 residues: Elongation factor P (187 aa).

Belongs to the elongation factor P family.

Its subcellular location is the cytoplasm. It functions in the pathway protein biosynthesis; polypeptide chain elongation. In terms of biological role, involved in peptide bond synthesis. Stimulates efficient translation and peptide-bond synthesis on native or reconstituted 70S ribosomes in vitro. Probably functions indirectly by altering the affinity of the ribosome for aminoacyl-tRNA, thus increasing their reactivity as acceptors for peptidyl transferase. In Thermodesulfovibrio yellowstonii (strain ATCC 51303 / DSM 11347 / YP87), this protein is Elongation factor P.